The following is a 136-amino-acid chain: Classical arabinogalactan protein 26 (136 aa).

The N-terminal stretch at 1–21 is a signal peptide; the sequence is MSVSLFTAFTVLSLCLHTSTS. A disordered region spans residues 38-95; it reads APSSFSASTPAMSPDTSPLFPTPGSSEMSPSPSESSIMPTIPSSLSPPNPDAVTPDPL. Over residues 40-53 the composition is skewed to polar residues; the sequence is SSFSASTPAMSPDT. Over residues 59–81 the composition is skewed to low complexity; it reads TPGSSEMSPSPSESSIMPTIPSS. S108 carries the GPI-anchor amidated serine lipid modification. Residues 109-136 constitute a propeptide, removed in mature form; sequence SSVCLVSSQLSSLLLVLLMLLLAFCSFF.

Belongs to the classical AGP family. Post-translationally, O-glycosylated on the hydroxyproline residues.

The protein resides in the cell membrane. Functionally, proteoglycan that seems to be implicated in diverse developmental roles such as differentiation, cell-cell recognition, embryogenesis and programmed cell death. This is Classical arabinogalactan protein 26 (AGP26) from Arabidopsis thaliana (Mouse-ear cress).